The primary structure comprises 89 residues: Small ribosomal subunit protein uS15 (89 aa).

Over residues 1 to 13 (MYLTSEKKEEIFS) the composition is skewed to basic and acidic residues. Positions 1-24 (MYLTSEKKEEIFSKHGKGKNDTGS) are disordered.

Belongs to the universal ribosomal protein uS15 family. As to quaternary structure, part of the 30S ribosomal subunit. Forms a bridge to the 50S subunit in the 70S ribosome, contacting the 23S rRNA.

Its function is as follows. One of the primary rRNA binding proteins, it binds directly to 16S rRNA where it helps nucleate assembly of the platform of the 30S subunit by binding and bridging several RNA helices of the 16S rRNA. Functionally, forms an intersubunit bridge (bridge B4) with the 23S rRNA of the 50S subunit in the ribosome. The polypeptide is Small ribosomal subunit protein uS15 (Christiangramia forsetii (strain DSM 17595 / CGMCC 1.15422 / KT0803) (Gramella forsetii)).